The primary structure comprises 434 residues: N-acylneuraminate cytidylyltransferase (434 aa).

Methionine 1 bears the N-acetylmethionine mark. The tract at residues 1–42 (MDSVEKGAATSVSNPRGRPSRGRPPKLQRNSRGGQGRGVEKP) is disordered. The short motif at 15-31 (PRGRPSRGRPPKLQRNS) is the BC1 motif element. Residues arginine 37 and arginine 52 each carry the omega-N-methylarginine modification. Substrate is bound by residues arginine 52, asparagine 62, arginine 111, serine 120, serine 122, and glutamine 143. Residues 200–206 (KRPRRQD) carry the BC2 motif motif. Arginine 201 is an active-site residue. The BC3 motif motif lies at 269–276 (KEKLKEIK).

It belongs to the CMP-NeuNAc synthase family. As to quaternary structure, homotetramer; the active enzyme is formed by a dimer of dimers. As to expression, ubiquitously expressed. Expressed in pancreas, kidney, liver, skeletal muscle, lung, placenta, brain, heart, colon, PBL, small intestine, ovary, testis, prostate, thymus and spleen.

It localises to the nucleus. The catalysed reaction is an N-acylneuraminate + CTP = a CMP-N-acyl-beta-neuraminate + diphosphate. It functions in the pathway amino-sugar metabolism; N-acetylneuraminate metabolism. Its function is as follows. Catalyzes the activation of N-acetylneuraminic acid (NeuNAc) to cytidine 5'-monophosphate N-acetylneuraminic acid (CMP-NeuNAc), a substrate required for the addition of sialic acid. Has some activity toward NeuNAc, N-glycolylneuraminic acid (Neu5Gc) or 2-keto-3-deoxy-D-glycero-D-galacto-nononic acid (KDN). The protein is N-acylneuraminate cytidylyltransferase (CMAS) of Homo sapiens (Human).